We begin with the raw amino-acid sequence, 123 residues long: Small ribosomal subunit protein uS12 (123 aa).

Position 89 is a 3-methylthioaspartic acid (Asp89). The disordered stretch occupies residues Asp103–Lys123. Residues Gly113–Lys123 are compositionally biased toward basic residues.

The protein belongs to the universal ribosomal protein uS12 family. In terms of assembly, part of the 30S ribosomal subunit. Contacts proteins S8 and S17. May interact with IF1 in the 30S initiation complex.

Functionally, with S4 and S5 plays an important role in translational accuracy. In terms of biological role, interacts with and stabilizes bases of the 16S rRNA that are involved in tRNA selection in the A site and with the mRNA backbone. Located at the interface of the 30S and 50S subunits, it traverses the body of the 30S subunit contacting proteins on the other side and probably holding the rRNA structure together. The combined cluster of proteins S8, S12 and S17 appears to hold together the shoulder and platform of the 30S subunit. This chain is Small ribosomal subunit protein uS12, found in Nitratidesulfovibrio vulgaris (strain ATCC 29579 / DSM 644 / CCUG 34227 / NCIMB 8303 / VKM B-1760 / Hildenborough) (Desulfovibrio vulgaris).